The sequence spans 568 residues: Glucose-6-phosphate isomerase, cytosolic 1 (568 aa).

Residue E360 is the Proton donor of the active site. Catalysis depends on residues H391 and K516.

The protein belongs to the GPI family. As to quaternary structure, homodimer.

Its subcellular location is the cytoplasm. The catalysed reaction is alpha-D-glucose 6-phosphate = beta-D-fructose 6-phosphate. The protein operates within carbohydrate degradation; glycolysis; D-glyceraldehyde 3-phosphate and glycerone phosphate from D-glucose: step 2/4. In Clarkia arcuata (Glandular clarkia), this protein is Glucose-6-phosphate isomerase, cytosolic 1 (PGIC1).